The primary structure comprises 463 residues: Interferon-inducible GTPase 5 (463 aa).

The IRG-type G domain occupies 53 to 235 (IRLEVGVTGE…PTLVSTWEHD (183 aa)). GTP-binding positions include 62 to 69 (ESGAGKSS), 87 to 91 (TGVME), 169 to 171 (KVD), and 216 to 218 (SNL). A phosphoserine mark is found at Ser-247 and Ser-304. Residues 404–437 (LEDDEPQPEVSLEVASDNGVEKGGSGEGGGEEAP) form a disordered region.

Belongs to the TRAFAC class dynamin-like GTPase superfamily. IRG family. Abundantly expressed in semen (at protein level).

The protein resides in the cell projection. The protein localises to the cilium. It localises to the flagellum. It is found in the lipid droplet. It catalyses the reaction GTP + H2O = GDP + phosphate + H(+). Required for sperm motility and therefore male fertility, via positive regulation of spermatozoa fibrous sheath formation. This is Interferon-inducible GTPase 5 from Homo sapiens (Human).